The sequence spans 432 residues: Trigger factor (432 aa).

Residues 161 to 246 enclose the PPIase FKBP-type domain; it reads EDRVTIDFTG…LKKVEERELP (86 aa).

Belongs to the FKBP-type PPIase family. Tig subfamily. Homodimer and monomer. In vivo most of the ribosomes are in complex with monomeric TF. Uncomplexed TF, however, is in a monomer-dimer equilibrium with approximately two thirds of TF existing in a dimeric state.

It is found in the cytoplasm. The catalysed reaction is [protein]-peptidylproline (omega=180) = [protein]-peptidylproline (omega=0). Its function is as follows. Involved in protein export. Acts as a chaperone by maintaining the newly synthesized protein in an open conformation. Functions as a peptidyl-prolyl cis-trans isomerase. This is Trigger factor from Escherichia coli O127:H6 (strain E2348/69 / EPEC).